The sequence spans 184 residues: Transposon Tn917 resolvase (184 aa).

In terms of domain architecture, Resolvase/invertase-type recombinase catalytic spans Met-1 to Gly-134. The active-site O-(5'-phospho-DNA)-serine intermediate is Ser-9. A DNA-binding region (H-T-H motif) is located at residues Ile-161–Asn-180.

It belongs to the site-specific recombinase resolvase family.

Functionally, resolvase catalyzes the resolution (a site-specific recombination) of the cointegrated replicon to yield the final transposition products. The polypeptide is Transposon Tn917 resolvase (tnpR) (Enterococcus faecalis (Streptococcus faecalis)).